A 651-amino-acid chain; its full sequence is Chaperone protein HtpG (651 aa).

The a; substrate-binding stretch occupies residues 1 to 353; the sequence is MAPHVEQLEF…AQDMSLNVSR (353 aa). Positions 354 to 569 are b; the sequence is EILQQDRQIR…TFGITPALAR (216 aa). Residues 570 to 651 are c; the sequence is MYRASGQPVP…RLTRMVGEQS (82 aa).

It belongs to the heat shock protein 90 family. Homodimer.

The protein resides in the cytoplasm. Its function is as follows. Molecular chaperone. Has ATPase activity. This Mycolicibacterium gilvum (strain PYR-GCK) (Mycobacterium gilvum (strain PYR-GCK)) protein is Chaperone protein HtpG.